Reading from the N-terminus, the 633-residue chain is Probable alkaline/neutral invertase A, chloroplastic (633 aa).

The N-terminal 71 residues, 1 to 71 (MNAITFLGNS…TNAVPFCTDR (71 aa)), are a transit peptide targeting the chloroplast. At Ser623 the chain carries Phosphoserine.

This sequence belongs to the glycosyl hydrolase 100 family. As to expression, expressed in flowers.

It localises to the plastid. The protein resides in the chloroplast. The catalysed reaction is Hydrolysis of terminal non-reducing beta-D-fructofuranoside residues in beta-D-fructofuranosides.. Chloroplastic invertase that cleaves sucrose into glucose and fructose and may participate in the carbon flux between the cytosol and plastids in leaves. This is Probable alkaline/neutral invertase A, chloroplastic from Arabidopsis thaliana (Mouse-ear cress).